A 518-amino-acid chain; its full sequence is Laccase (518 aa).

The N-terminal stretch at methionine 1–alanine 21 is a signal peptide. Plastocyanin-like domains lie at isoleucine 23–tyrosine 148 and isoleucine 160–tyrosine 302. N-linked (GlcNAc...) asparagine glycans are attached at residues asparagine 72 and asparagine 75. 4 residues coordinate Cu cation: histidine 85, histidine 87, histidine 130, and histidine 132. Cystine bridges form between cysteine 106–cysteine 507 and cysteine 138–cysteine 226. An N-linked (GlcNAc...) asparagine glycan is attached at asparagine 229. Positions valine 308–threonine 330 are disordered. N-linked (GlcNAc...) asparagine glycans are attached at residues asparagine 354, asparagine 362, and asparagine 398. A Plastocyanin-like 3 domain is found at serine 369–aspartate 489. Residues histidine 416, histidine 419, histidine 421, histidine 471, cysteine 472, histidine 473, and histidine 477 each coordinate Cu cation.

It belongs to the multicopper oxidase family. Requires Cu cation as cofactor.

It is found in the secreted. The catalysed reaction is 4 hydroquinone + O2 = 4 benzosemiquinone + 2 H2O. Functionally, lignin degradation and detoxification of lignin-derived products. Cleaves the C-C and C-O bonds of some phenolic lignin model compounds (such as O- and P-quinols, aminophenols and phenylenediamine). May also be involved in synthesis of phenoxazinone pigments. This chain is Laccase (LCC3-1), found in Pycnoporus cinnabarinus (Cinnabar-red polypore).